Consider the following 180-residue polypeptide: Protein SPO16 homolog (180 aa).

As to quaternary structure, homooligomer. Interacts with SHOC, SYCP1 and SYCE3.

Its subcellular location is the chromosome. In terms of biological role, plays a key role in reinforcing the integrity of the central element of the synaptonemal complex (SC) thereby stabilizing SC, ensuring progression of meiotic prophase I in male and female germ cells. Promotes homologous recombination and crossing-over in meiotic prophase I via its association with SHOC1. Required for the localization of TEX11 and MSH4 to recombination intermediates. This Homo sapiens (Human) protein is Protein SPO16 homolog.